Here is a 357-residue protein sequence, read N- to C-terminus: Leucoanthocyanidin dioxygenase (357 aa).

A Fe2OG dioxygenase domain is found at 212 to 311 (LLLQMKINYY…RISWAVFCEP (100 aa)). Fe cation is bound by residues His236, Asp238, and His292.

Belongs to the iron/ascorbate-dependent oxidoreductase family. Requires Fe cation as cofactor. L-ascorbate serves as cofactor.

It catalyses the reaction a (2R,3S,4S)-leucoanthocyanidin + 2-oxoglutarate + O2 = a 4-H-anthocyanidin with a 3-hydroxy group + succinate + CO2 + 2 H2O. It functions in the pathway pigment biosynthesis; anthocyanin biosynthesis. Its function is as follows. Oxidation of leucoanthocyanidins into anthocyanidins. In Malus domestica (Apple), this protein is Leucoanthocyanidin dioxygenase (ANS).